Here is a 136-residue protein sequence, read N- to C-terminus: Large-conductance mechanosensitive channel (136 aa).

2 helical membrane passes run 10-30 (FAMRGNVVDLAVGVIIGAAFG) and 76-96 (GVFIQNVFDFLIVAFAIFMAI).

The protein belongs to the MscL family. In terms of assembly, homopentamer.

It localises to the cell inner membrane. Its function is as follows. Channel that opens in response to stretch forces in the membrane lipid bilayer. May participate in the regulation of osmotic pressure changes within the cell. The protein is Large-conductance mechanosensitive channel of Escherichia coli O139:H28 (strain E24377A / ETEC).